The chain runs to 96 residues: Nucleoid-associated protein CF0672 (96 aa).

It belongs to the YbaB/EbfC family. In terms of assembly, homodimer.

It localises to the cytoplasm. Its subcellular location is the nucleoid. Its function is as follows. Binds to DNA and alters its conformation. May be involved in regulation of gene expression, nucleoid organization and DNA protection. This Chlamydia felis (strain Fe/C-56) (Chlamydophila felis) protein is Nucleoid-associated protein CF0672.